The following is a 309-amino-acid chain: Aspartate carbamoyltransferase catalytic subunit (309 aa).

Residues arginine 55 and threonine 56 each coordinate carbamoyl phosphate. Lysine 85 contributes to the L-aspartate binding site. Residues arginine 106, histidine 135, and glutamine 138 each coordinate carbamoyl phosphate. Positions 168 and 230 each coordinate L-aspartate. The carbamoyl phosphate site is built by leucine 268 and proline 269.

The protein belongs to the aspartate/ornithine carbamoyltransferase superfamily. ATCase family. In terms of assembly, heterododecamer (2C3:3R2) of six catalytic PyrB chains organized as two trimers (C3), and six regulatory PyrI chains organized as three dimers (R2).

It carries out the reaction carbamoyl phosphate + L-aspartate = N-carbamoyl-L-aspartate + phosphate + H(+). The protein operates within pyrimidine metabolism; UMP biosynthesis via de novo pathway; (S)-dihydroorotate from bicarbonate: step 2/3. Functionally, catalyzes the condensation of carbamoyl phosphate and aspartate to form carbamoyl aspartate and inorganic phosphate, the committed step in the de novo pyrimidine nucleotide biosynthesis pathway. The polypeptide is Aspartate carbamoyltransferase catalytic subunit (Aliivibrio fischeri (strain MJ11) (Vibrio fischeri)).